We begin with the raw amino-acid sequence, 215 residues long: Cytochrome b6 (215 aa).

A helical transmembrane segment spans residues 32–52 (IFYCLGGITLTCFLVQVATGF). Residue cysteine 35 coordinates heme c. Heme b is bound by residues histidine 86 and histidine 100. Transmembrane regions (helical) follow at residues 90–110 (ASMM…TGGF), 116–136 (LTWV…VTGY), and 186–206 (LHTF…FPMI). Histidine 187 and histidine 202 together coordinate heme b.

Belongs to the cytochrome b family. PetB subfamily. The 4 large subunits of the cytochrome b6-f complex are cytochrome b6, subunit IV (17 kDa polypeptide, PetD), cytochrome f and the Rieske protein, while the 4 small subunits are PetG, PetL, PetM and PetN. The complex functions as a dimer. It depends on heme b as a cofactor. Heme c is required as a cofactor.

The protein resides in the plastid. It is found in the chloroplast thylakoid membrane. Its function is as follows. Component of the cytochrome b6-f complex, which mediates electron transfer between photosystem II (PSII) and photosystem I (PSI), cyclic electron flow around PSI, and state transitions. The chain is Cytochrome b6 from Jasminum nudiflorum (Winter jasmine).